The primary structure comprises 403 residues: Alkaline protease 1 (403 aa).

A signal peptide spans 1–21 (MLSIKRTLLLLGAVLPAVFGA). Positions 22-125 (PVQETRRAAQ…QIWYLDALTT (104 aa)) are excised as a propeptide. The Inhibitor I9 domain occupies 36–120 (KYIVTFKPGT…HVEEDQIWYL (85 aa)). The Peptidase S8 domain maps to 130–403 (PWGLGSISHK…PNKLAYNGNA (274 aa)). Catalysis depends on charge relay system residues aspartate 162 and histidine 193. Asparagine 253 and asparagine 307 each carry an N-linked (GlcNAc...) asparagine glycan. Serine 349 functions as the Charge relay system in the catalytic mechanism. Asparagine 367 carries N-linked (GlcNAc...) asparagine glycosylation.

The protein belongs to the peptidase S8 family.

The protein localises to the secreted. It catalyses the reaction Hydrolysis of proteins with broad specificity, and of Bz-Arg-OEt &gt; Ac-Tyr-OEt. Does not hydrolyze peptide amides.. Its function is as follows. Secreted alkaline protease that allows assimilation of proteinaceous substrates. Acts as a significant virulence factor in invasive aspergillosis. Involved in immune evasion from the human and mice complement systems during infection. Efficiently cleaves important components of the complement cascade such as such as C3, C4, C5, and C1q, as well as IgG, which leads to down-regulation of complement activation at the hyphal surface. The protein is Alkaline protease 1 (alp1) of Aspergillus fumigatus (strain CBS 144.89 / FGSC A1163 / CEA10) (Neosartorya fumigata).